We begin with the raw amino-acid sequence, 883 residues long: Valine--tRNA ligase (883 aa).

Residues 46-56 carry the 'HIGH' region motif; that stretch reads PNVTGKLHLGH. Positions 520–524 match the 'KMSKS' region motif; it reads KMSKS. Lysine 523 contributes to the ATP binding site. Positions 809-844 form a coiled coil; the sequence is LADLLNVEEELARLEKELAKWQKELDMVGKKLSNER.

It belongs to the class-I aminoacyl-tRNA synthetase family. ValS type 1 subfamily. Monomer.

It localises to the cytoplasm. It carries out the reaction tRNA(Val) + L-valine + ATP = L-valyl-tRNA(Val) + AMP + diphosphate. In terms of biological role, catalyzes the attachment of valine to tRNA(Val). As ValRS can inadvertently accommodate and process structurally similar amino acids such as threonine, to avoid such errors, it has a 'posttransfer' editing activity that hydrolyzes mischarged Thr-tRNA(Val) in a tRNA-dependent manner. This is Valine--tRNA ligase from Streptococcus agalactiae serotype V (strain ATCC BAA-611 / 2603 V/R).